The sequence spans 673 residues: DNA ligase (673 aa).

NAD(+) is bound by residues Asp36–Asp40, Ser85–Leu86, and Glu118. Catalysis depends on Lys120, which acts as the N6-AMP-lysine intermediate. The NAD(+) site is built by Arg141, Glu178, Lys295, and Lys319. The Zn(2+) site is built by Cys413, Cys416, Cys431, and Cys437. Positions Val596 to Ala673 constitute a BRCT domain.

The protein belongs to the NAD-dependent DNA ligase family. LigA subfamily. Mg(2+) serves as cofactor. Requires Mn(2+) as cofactor.

The catalysed reaction is NAD(+) + (deoxyribonucleotide)n-3'-hydroxyl + 5'-phospho-(deoxyribonucleotide)m = (deoxyribonucleotide)n+m + AMP + beta-nicotinamide D-nucleotide.. DNA ligase that catalyzes the formation of phosphodiester linkages between 5'-phosphoryl and 3'-hydroxyl groups in double-stranded DNA using NAD as a coenzyme and as the energy source for the reaction. It is essential for DNA replication and repair of damaged DNA. The protein is DNA ligase of Histophilus somni (strain 129Pt) (Haemophilus somnus).